The sequence spans 404 residues: 4-hydroxy-3-methylbut-2-enyl diphosphate reductase (404 aa).

Cys-66 serves as a coordination point for [4Fe-4S] cluster. His-96 is a binding site for (2E)-4-hydroxy-3-methylbut-2-enyl diphosphate. His-96 is a dimethylallyl diphosphate binding site. His-96 provides a ligand contact to isopentenyl diphosphate. Cys-157 provides a ligand contact to [4Fe-4S] cluster. His-185 contributes to the (2E)-4-hydroxy-3-methylbut-2-enyl diphosphate binding site. His-185 is a dimethylallyl diphosphate binding site. Residue His-185 coordinates isopentenyl diphosphate. Glu-187 serves as the catalytic Proton donor. Thr-250 serves as a coordination point for (2E)-4-hydroxy-3-methylbut-2-enyl diphosphate. Residue Cys-288 participates in [4Fe-4S] cluster binding. 4 residues coordinate (2E)-4-hydroxy-3-methylbut-2-enyl diphosphate: Ser-317, Ser-318, Asn-319, and Ser-380. Dimethylallyl diphosphate contacts are provided by Ser-317, Ser-318, Asn-319, and Ser-380. Positions 317, 318, 319, and 380 each coordinate isopentenyl diphosphate.

Belongs to the IspH family. The cofactor is [4Fe-4S] cluster.

The catalysed reaction is isopentenyl diphosphate + 2 oxidized [2Fe-2S]-[ferredoxin] + H2O = (2E)-4-hydroxy-3-methylbut-2-enyl diphosphate + 2 reduced [2Fe-2S]-[ferredoxin] + 2 H(+). The enzyme catalyses dimethylallyl diphosphate + 2 oxidized [2Fe-2S]-[ferredoxin] + H2O = (2E)-4-hydroxy-3-methylbut-2-enyl diphosphate + 2 reduced [2Fe-2S]-[ferredoxin] + 2 H(+). Its pathway is isoprenoid biosynthesis; dimethylallyl diphosphate biosynthesis; dimethylallyl diphosphate from (2E)-4-hydroxy-3-methylbutenyl diphosphate: step 1/1. It functions in the pathway isoprenoid biosynthesis; isopentenyl diphosphate biosynthesis via DXP pathway; isopentenyl diphosphate from 1-deoxy-D-xylulose 5-phosphate: step 6/6. Functionally, catalyzes the conversion of 1-hydroxy-2-methyl-2-(E)-butenyl 4-diphosphate (HMBPP) into a mixture of isopentenyl diphosphate (IPP) and dimethylallyl diphosphate (DMAPP). Acts in the terminal step of the DOXP/MEP pathway for isoprenoid precursor biosynthesis. The polypeptide is 4-hydroxy-3-methylbut-2-enyl diphosphate reductase (Prochlorococcus marinus (strain MIT 9211)).